We begin with the raw amino-acid sequence, 233 residues long: MRFPTPLIPATLVRRYKRFLADVLLPDGTAATAHVANSGTMLGIDAPGSPVWLSRSPNPARKLPYTLELVEADGTLVGCNTAHPNRIVAEAVAAGEIPALAGYATLRREVKYGRNSRIDLLLEDPVRGSAYVEVKNVHLRRQGRLAEFPDCVTSRGAKHLEELAAMVAAGHRAVMVYLVQRADCDTFRIAADIDPAYAAGLRVALDHGVEALVLGCALTPDGIGIDRTLRLSA.

The protein belongs to the SfsA family.

This chain is Sugar fermentation stimulation protein homolog, found in Rhodospirillum centenum (strain ATCC 51521 / SW).